The primary structure comprises 167 residues: Ubiquitin-fold modifier-conjugating enzyme 1 (167 aa).

Catalysis depends on cysteine 116, which acts as the Glycyl thioester intermediate. Lysine 122 is covalently cross-linked (Glycyl lysine isopeptide (Lys-Gly) (interchain with G-Cter in UFM1)).

Belongs to the ubiquitin-conjugating enzyme family. UFC1 subfamily. As to quaternary structure, interacts with UBA5 (via C-terminus). Interacts with UFL1. Interacts with UFM1. Interacts with KIRREL3. In terms of processing, ufmylated at Lys-122. Deufmylated by UFSP1.

E2-like enzyme which specifically catalyzes the second step in ufmylation. Accepts the ubiquitin-like modifier UFM1 from the E1 enzyme UBA5 and forms an intermediate with UFM1 via a thioester linkage. Ufmylation is involved in various processes, such as ribosome recycling, response to DNA damage, interferon response or reticulophagy (also called ER-phagy). This is Ubiquitin-fold modifier-conjugating enzyme 1 from Mus musculus (Mouse).